Reading from the N-terminus, the 99-residue chain is Large ribosomal subunit protein bL21 (99 aa).

This sequence belongs to the bacterial ribosomal protein bL21 family. In terms of assembly, part of the 50S ribosomal subunit. Contacts protein L20.

This protein binds to 23S rRNA in the presence of protein L20. This Mycoplasma mobile (strain ATCC 43663 / 163K / NCTC 11711) (Mesomycoplasma mobile) protein is Large ribosomal subunit protein bL21.